The sequence spans 951 residues: Serine/threonine-protein phosphatase 4 regulatory subunit 1 (951 aa).

HEAT repeat units follow at residues 26 to 63 (ESDV…VFNR), 82 to 119 (RDCI…FCQE), 127 to 164 (AFSK…QELI), 168 to 206 (DVET…MVGK), 208 to 246 (ITER…VVGQ), 248 to 285 (ATEE…ATCQ), and 287 to 324 (IRRT…TFAN). 4 disordered regions span residues 326–395 (SSSG…DMRV), 407–501 (SESP…MATR), 539–569 (HDEA…SISE), and 592–612 (GGAD…ERRP). 3 stretches are compositionally biased toward basic and acidic residues: residues 332 to 360 (FKDE…RPED), 464 to 483 (DLDK…ERTG), and 539 to 551 (HDEA…RSEL). The stretch at 502-539 (KELEEMIENLEPHMDDPDVKAQVEVLSAALRASTLDAH) is one HEAT 8 repeat. A compositionally biased stretch (gly residues) spans 594-604 (ADVGPGGGGGF). 4 HEAT repeats span residues 699–735 (LTAA…LLHI), 777–815 (RDVY…KLHM), 820–858 (TFGV…DDCL), and 862–899 (QFAV…EKEY). Ser936 is subject to Phosphoserine.

In terms of assembly, serine/threonine-protein phosphatase 4 (PP4) occurs in different assemblies of the catalytic and one or more regulatory subunits. Component of the PP4 complex PPP4C-PPP4R1. Interacts with HDAC3.

Functionally, regulatory subunit of serine/threonine-protein phosphatase 4. May play a role in regulation of cell division in renal glomeruli. The PPP4C-PPP4R1 PP4 complex may play a role in dephosphorylation and regulation of HDAC3. Plays a role in the inhibition of TNF-induced NF-kappa-B activation by regulating the dephosphorylation of TRAF2. This is Serine/threonine-protein phosphatase 4 regulatory subunit 1 (Ppp4r1) from Rattus norvegicus (Rat).